A 337-amino-acid polypeptide reads, in one-letter code: Acetyl-coenzyme A synthetase (337 aa).

CoA-binding positions include 131-134 (RGGR), Thr249, and Asn273. Position 325 to 327 (325 to 327 (GEP)) interacts with ATP.

Belongs to the ATP-dependent AMP-binding enzyme family. Mg(2+) serves as cofactor. Acetylated. Deacetylation by the SIR2-homolog deacetylase activates the enzyme.

It catalyses the reaction acetate + ATP + CoA = acetyl-CoA + AMP + diphosphate. Functionally, catalyzes the conversion of acetate into acetyl-CoA (AcCoA), an essential intermediate at the junction of anabolic and catabolic pathways. AcsA undergoes a two-step reaction. In the first half reaction, AcsA combines acetate with ATP to form acetyl-adenylate (AcAMP) intermediate. In the second half reaction, it can then transfer the acetyl group from AcAMP to the sulfhydryl group of CoA, forming the product AcCoA. In Nostoc linckia, this protein is Acetyl-coenzyme A synthetase (acsA).